Reading from the N-terminus, the 179-residue chain is Large ribosomal subunit protein uL5c (179 aa).

It belongs to the universal ribosomal protein uL5 family. In terms of assembly, part of the 50S ribosomal subunit; contacts the 5S rRNA.

Its subcellular location is the plastid. The protein resides in the chloroplast. Its function is as follows. Binds 5S rRNA, forms part of the central protuberance of the 50S subunit. The chain is Large ribosomal subunit protein uL5c (rpl5) from Gracilaria tenuistipitata var. liui (Red alga).